The following is a 227-amino-acid chain: 7-cyano-7-deazaguanine synthase (227 aa).

Residue 8–18 coordinates ATP; that stretch reads FSGGQDSTTCL. Residues Cys-187, Cys-196, Cys-199, and Cys-202 each coordinate Zn(2+).

The protein belongs to the QueC family. It depends on Zn(2+) as a cofactor.

It catalyses the reaction 7-carboxy-7-deazaguanine + NH4(+) + ATP = 7-cyano-7-deazaguanine + ADP + phosphate + H2O + H(+). The protein operates within purine metabolism; 7-cyano-7-deazaguanine biosynthesis. Its function is as follows. Catalyzes the ATP-dependent conversion of 7-carboxy-7-deazaguanine (CDG) to 7-cyano-7-deazaguanine (preQ(0)). The protein is 7-cyano-7-deazaguanine synthase of Aliivibrio fischeri (strain MJ11) (Vibrio fischeri).